A 397-amino-acid polypeptide reads, in one-letter code: Transaldolase (397 aa).

Lysine 136 serves as the catalytic Schiff-base intermediate with substrate.

It belongs to the transaldolase family. Type 1 subfamily. Homodimer.

The protein resides in the cytoplasm. The catalysed reaction is D-sedoheptulose 7-phosphate + D-glyceraldehyde 3-phosphate = D-erythrose 4-phosphate + beta-D-fructose 6-phosphate. Its pathway is carbohydrate degradation; pentose phosphate pathway; D-glyceraldehyde 3-phosphate and beta-D-fructose 6-phosphate from D-ribose 5-phosphate and D-xylulose 5-phosphate (non-oxidative stage): step 2/3. Its function is as follows. Transaldolase is important for the balance of metabolites in the pentose-phosphate pathway. The polypeptide is Transaldolase (Synechococcus sp. (strain ATCC 27144 / PCC 6301 / SAUG 1402/1) (Anacystis nidulans)).